We begin with the raw amino-acid sequence, 51 residues long: Large ribosomal subunit protein bL33 (51 aa).

Belongs to the bacterial ribosomal protein bL33 family.

This chain is Large ribosomal subunit protein bL33, found in Pseudomonas putida (strain ATCC 47054 / DSM 6125 / CFBP 8728 / NCIMB 11950 / KT2440).